A 147-amino-acid chain; its full sequence is 3-dehydroquinate dehydratase 2 (147 aa).

Tyrosine 23 (proton acceptor) is an active-site residue. 3 residues coordinate substrate: asparagine 74, histidine 80, and aspartate 87. The active-site Proton donor is histidine 100. Residues 101 to 102 (IS) and arginine 111 each bind substrate.

Belongs to the type-II 3-dehydroquinase family. Homododecamer.

It catalyses the reaction 3-dehydroquinate = 3-dehydroshikimate + H2O. The protein operates within metabolic intermediate biosynthesis; chorismate biosynthesis; chorismate from D-erythrose 4-phosphate and phosphoenolpyruvate: step 3/7. Its function is as follows. Catalyzes a trans-dehydration via an enolate intermediate. The chain is 3-dehydroquinate dehydratase 2 (aroQ2) from Agrobacterium fabrum (strain C58 / ATCC 33970) (Agrobacterium tumefaciens (strain C58)).